We begin with the raw amino-acid sequence, 795 residues long: Phenylalanine--tRNA ligase beta subunit (795 aa).

In terms of domain architecture, tRNA-binding spans 39-148; sequence AGTFNGVKVG…IDAPIGMDFR (110 aa). A B5 domain is found at 401–476; that stretch reads PKPNKVALRR…RIYGYDNIPN (76 aa). Mg(2+) contacts are provided by Asp-454, Asp-460, Glu-463, and Glu-464. An FDX-ACB domain is found at 701 to 794; sequence SKFPANRRDI…VSEKFGASLR (94 aa).

Belongs to the phenylalanyl-tRNA synthetase beta subunit family. Type 1 subfamily. In terms of assembly, tetramer of two alpha and two beta subunits. It depends on Mg(2+) as a cofactor.

It is found in the cytoplasm. It carries out the reaction tRNA(Phe) + L-phenylalanine + ATP = L-phenylalanyl-tRNA(Phe) + AMP + diphosphate + H(+). This chain is Phenylalanine--tRNA ligase beta subunit, found in Vibrio vulnificus (strain CMCP6).